We begin with the raw amino-acid sequence, 497 residues long: 4,4'-diaponeurosporene oxygenase (497 aa).

7–19 provides a ligand contact to FAD; that stretch reads VIGGGLGGISAAI.

It belongs to the carotenoid/retinoid oxidoreductase family. CrtP subfamily. FAD is required as a cofactor.

The enzyme catalyses all-trans-4,4'-diaponeurosporene + 2 AH2 + 2 O2 = 4,4'-diaponeurosporenal + 2 A + 3 H2O. The protein operates within carotenoid biosynthesis; staphyloxanthin biosynthesis; staphyloxanthin from farnesyl diphosphate: step 3/5. Its function is as follows. Involved in the biosynthesis of the yellow-orange carotenoid staphyloxanthin, which plays a role in the virulence via its protective function against oxidative stress. Catalyzes the oxidation of the terminal methyl side group of 4,4'-diaponeurosporene to form 4,4'-diaponeurosporen-4-al. The sequence is that of 4,4'-diaponeurosporene oxygenase from Staphylococcus aureus (strain MRSA252).